We begin with the raw amino-acid sequence, 206 residues long: Dephospho-CoA kinase (206 aa).

The region spanning 4-200 (IVALTGGIGS…AHYLQLASQF (197 aa)) is the DPCK domain. 12-17 (GSGKST) is a binding site for ATP.

It belongs to the CoaE family.

The protein resides in the cytoplasm. It catalyses the reaction 3'-dephospho-CoA + ATP = ADP + CoA + H(+). Its pathway is cofactor biosynthesis; coenzyme A biosynthesis; CoA from (R)-pantothenate: step 5/5. Catalyzes the phosphorylation of the 3'-hydroxyl group of dephosphocoenzyme A to form coenzyme A. In Shigella flexneri, this protein is Dephospho-CoA kinase.